Consider the following 295-residue polypeptide: Protoheme IX farnesyltransferase (295 aa).

The next 9 helical transmembrane spans lie at 24–43 (IMYLVVFTAVAGMVAAPGSI), 47–69 (LALISLICIALGSGSAGAINMWY), 94–114 (SALEFGVTIGVLSVFIMAIAV), 117–137 (ISAILLAIGILFYIFIYTIWL), 144–164 (NIVIGGASGAFPPVIGWAVVT), 171–191 (GFVLFLIIFMWTPPHFWALSL), 216–236 (KYILVYSVLLVLTSLLPALFL), 241–261 (FYLGMAIFGGCIFIWHAVSIM), and 272–292 (MFSYSISYLFFLFASIILCSI).

The protein belongs to the UbiA prenyltransferase family. Protoheme IX farnesyltransferase subfamily.

The protein resides in the cell membrane. It carries out the reaction heme b + (2E,6E)-farnesyl diphosphate + H2O = Fe(II)-heme o + diphosphate. It participates in porphyrin-containing compound metabolism; heme O biosynthesis; heme O from protoheme: step 1/1. In terms of biological role, converts heme B (protoheme IX) to heme O by substitution of the vinyl group on carbon 2 of heme B porphyrin ring with a hydroxyethyl farnesyl side group. The sequence is that of Protoheme IX farnesyltransferase from Wolbachia sp. subsp. Brugia malayi (strain TRS).